The following is a 110-amino-acid chain: MHMTDVLPAGDISKAVEAFAAPDSFNHKKFFEMCGLKSKGPDVMKQVFGILDQDRSGFIEEDELCLMLKGFTPNARSLSVKETTALLAAGDKDGDGKIGMDEFVTLVSES.

2 consecutive EF-hand domains span residues 39-74 and 78-110; these read KGPDVMKQVFGILDQDRSGFIEEDELCLMLKGFTPN and LSVKETTALLAAGDKDGDGKIGMDEFVTLVSES. Residues Asp-52, Asp-54, Ser-56, Phe-58, Glu-60, Glu-63, Asp-91, Asp-93, Asp-95, Lys-97, and Glu-102 each contribute to the Ca(2+) site.

The protein belongs to the parvalbumin family.

Its function is as follows. In muscle, parvalbumin is thought to be involved in relaxation after contraction. It binds two calcium ions. This chain is Parvalbumin alpha, found in Aquarana catesbeiana (American bullfrog).